The following is a 426-amino-acid chain: Synaptotagmin-13 (426 aa).

At 1–6 (MVLSVP) the chain is on the vesicular side. Residues 7–29 (VIALGATLGTATSILALCGVTCL) traverse the membrane as a helical segment. Residues 30-426 (CRHMHPKKGL…QIAMWHQLHL (397 aa)) are Cytoplasmic-facing. C2 domains follow at residues 158 to 275 (QAPK…AQWG) and 287 to 422 (GTGE…AMWH).

It belongs to the synaptotagmin family. As to quaternary structure, interacts with NRXN1. In terms of tissue distribution, expressed in brain, spleen, kidney and testis.

It is found in the membrane. In terms of biological role, may be involved in transport vesicle docking to the plasma membrane. The polypeptide is Synaptotagmin-13 (Syt13) (Rattus norvegicus (Rat)).